Reading from the N-terminus, the 484-residue chain is RuvB-like helicase 1 (484 aa).

The segment covering 1–11 (MSMAASSSTAT) has biased composition (low complexity). The tract at residues 1 to 27 (MSMAASSSTATVQPSGIITQPPPPSTL) is disordered. 87-94 (GPPGTGKT) lines the ATP pocket.

It belongs to the RuvB family. As to quaternary structure, may form heterododecamers with RVB2. Component of the SWR1 chromatin remodeling complex, the INO80 chromatin remodeling complex, and of the R2TP complex.

Its subcellular location is the nucleus. It carries out the reaction ATP + H2O = ADP + phosphate + H(+). DNA helicase which participates in several chromatin remodeling complexes, including the SWR1 and the INO80 complexes. The SWR1 complex mediates the ATP-dependent exchange of histone H2A for the H2A variant HZT1 leading to transcriptional regulation of selected genes by chromatin remodeling. The INO80 complex remodels chromatin by shifting nucleosomes and is involved in DNA repair. Also involved in pre-rRNA processing. In Cryptococcus neoformans var. neoformans serotype D (strain B-3501A) (Filobasidiella neoformans), this protein is RuvB-like helicase 1 (RVB1).